Reading from the N-terminus, the 486-residue chain is N-succinylglutamate 5-semialdehyde dehydrogenase (486 aa).

220–225 (GSSRTG) is a binding site for NAD(+). Active-site residues include Glu243 and Cys277.

Belongs to the aldehyde dehydrogenase family. AstD subfamily.

It catalyses the reaction N-succinyl-L-glutamate 5-semialdehyde + NAD(+) + H2O = N-succinyl-L-glutamate + NADH + 2 H(+). Its pathway is amino-acid degradation; L-arginine degradation via AST pathway; L-glutamate and succinate from L-arginine: step 4/5. In terms of biological role, catalyzes the NAD-dependent reduction of succinylglutamate semialdehyde into succinylglutamate. In Shewanella baltica (strain OS223), this protein is N-succinylglutamate 5-semialdehyde dehydrogenase.